The chain runs to 148 residues: D-aminoacyl-tRNA deacylase (148 aa).

Residues 136 to 137 (GP) carry the Gly-cisPro motif, important for rejection of L-amino acids motif.

It belongs to the DTD family. Homodimer.

It is found in the cytoplasm. The catalysed reaction is glycyl-tRNA(Ala) + H2O = tRNA(Ala) + glycine + H(+). It catalyses the reaction a D-aminoacyl-tRNA + H2O = a tRNA + a D-alpha-amino acid + H(+). An aminoacyl-tRNA editing enzyme that deacylates mischarged D-aminoacyl-tRNAs. Also deacylates mischarged glycyl-tRNA(Ala), protecting cells against glycine mischarging by AlaRS. Acts via tRNA-based rather than protein-based catalysis; rejects L-amino acids rather than detecting D-amino acids in the active site. By recycling D-aminoacyl-tRNA to D-amino acids and free tRNA molecules, this enzyme counteracts the toxicity associated with the formation of D-aminoacyl-tRNA entities in vivo and helps enforce protein L-homochirality. This is D-aminoacyl-tRNA deacylase from Streptococcus mutans serotype c (strain ATCC 700610 / UA159).